The chain runs to 87 residues: Small ribosomal subunit protein uS19 (87 aa).

The tract at residues 1–29 (MARSLKKGPFVDHHLQKKVDVQNKEGTKK) is disordered. Positions 9–28 (PFVDHHLQKKVDVQNKEGTK) are enriched in basic and acidic residues.

It belongs to the universal ribosomal protein uS19 family.

Protein S19 forms a complex with S13 that binds strongly to the 16S ribosomal RNA. The sequence is that of Small ribosomal subunit protein uS19 from Protochlamydia amoebophila (strain UWE25).